A 474-amino-acid polypeptide reads, in one-letter code: Probable dipeptidase B (474 aa).

Cys-11 is an active-site residue.

This sequence belongs to the peptidase C69 family.

The enzyme catalyses an L-aminoacyl-L-amino acid + H2O = 2 an L-alpha-amino acid. The polypeptide is Probable dipeptidase B (pepDB) (Lactococcus lactis subsp. lactis (strain IL1403) (Streptococcus lactis)).